Here is a 309-residue protein sequence, read N- to C-terminus: Probable manganese-dependent inorganic pyrophosphatase (309 aa).

Histidine 9, aspartate 13, aspartate 15, aspartate 75, histidine 97, and aspartate 149 together coordinate Mn(2+).

This sequence belongs to the PPase class C family. Mn(2+) is required as a cofactor.

Its subcellular location is the cytoplasm. It carries out the reaction diphosphate + H2O = 2 phosphate + H(+). This is Probable manganese-dependent inorganic pyrophosphatase from Staphylococcus saprophyticus subsp. saprophyticus (strain ATCC 15305 / DSM 20229 / NCIMB 8711 / NCTC 7292 / S-41).